The sequence spans 583 residues: Radixin (583 aa).

The region spanning 5 to 295 (INVRVTTMDA…GNHELYMRRR (291 aa)) is the FERM domain. An a 1,2-diacyl-sn-glycero-3-phospho-(1D-myo-inositol)-binding site is contributed by 60–63 (KLNK). Position 83 is an N6-succinyllysine (K83). K278 contacts a 1,2-diacyl-sn-glycero-3-phospho-(1D-myo-inositol). 3 disordered regions span residues 310–330 (REEKHQKQLERAQLENEKKKR), 376–407 (DQERKRAKEEAERLEKERRAAEEAKSAIAKQA), and 462–526 (ELKT…RVKK). Positions 376–400 (DQERKRAKEEAERLEKERRAAEEAK) are enriched in basic and acidic residues. Residues 469–480 (APPPPPPPPVIP) are compositionally biased toward pro residues. 2 stretches are compositionally biased toward basic and acidic residues: residues 483 to 492 (ENEHDEHDEN) and 506 to 525 (MNHRSEEERVTETQKNERVK). T564 bears the Phosphothreonine; by ROCK2 mark.

As to quaternary structure, binds NHERF1. Interacts with NHERF1, NHERF2, LAYN, MME/NEP and ICAM2. Interacts with CPNE1 (via VWFA domain) and CPNE4 (via VWFA domain). Interacts (via FERM domain) with SPN/CD43 cytoplasmic tail. Interacts with CD44. Interacts with CLIC5; may work together in a complex which also includes EZR and MYO6 to stabilize linkages between the plasma membrane and subjacent actin cytoskeleton at the base of stereocilia. Post-translationally, phosphorylated by tyrosine-protein kinases. Phosphorylation by ROCK2 suppresses the head-to-tail association of the N-terminal and C-terminal halves resulting in an opened conformation which is capable of actin and membrane-binding.

Its subcellular location is the cell membrane. It localises to the cytoplasm. The protein resides in the cytoskeleton. The protein localises to the cleavage furrow. It is found in the cell projection. Its subcellular location is the microvillus. It localises to the stereocilium. A head-to-tail association, of the N-terminal and C-terminal halves results in a closed conformation (inactive form) which is incapable of actin or membrane-binding. Its function is as follows. Probably plays a crucial role in the binding of the barbed end of actin filaments to the plasma membrane. The chain is Radixin (RDX) from Homo sapiens (Human).